Consider the following 145-residue polypeptide: Small t antigen (145 aa).

The J domain occupies 6–82; that stretch reads RLTELLCLPV…PEESGYATFE (77 aa). Residues 58-80 are disordered; sequence EGLRADETLEDSDPEPEESGYAT. Positions 65-75 are enriched in acidic residues; sequence TLEDSDPEPEE.

In terms of assembly, interacts with host PPP2R1A; the interaction inhibits PP2A activity.

It localises to the host cytoplasm. It is found in the host nucleus. Functionally, promotes efficient viral genome replication by accelerating both G1 and S phase progression of the cell cycle. The polypeptide is Small t antigen (Budgerigar fledgling disease virus (BFPyV)).